The following is a 127-amino-acid chain: uncharacterized protein (127 aa).

The N-terminal stretch at 1–16 (MLKKIIFGITISLTTG) is a signal peptide. A lipid anchor (N-palmitoyl cysteine) is attached at Cys17. Residue Cys17 is the site of S-diacylglycerol cysteine attachment. The stretch at 56–101 (EVREEIQKYRVEIVDINKKKRELYNRLSKEAQSFLAEQQKYKQKLS) forms a coiled coil. Positions 102-127 (IPKLLIENDPKNNTANSKDNNDKDMK) are disordered.

It is found in the cell membrane. This is an uncharacterized protein from Rickettsia prowazekii (strain Madrid E).